Reading from the N-terminus, the 220-residue chain is Botcinic acid biosynthesis cluster B protein 12 (220 aa).

It functions in the pathway polyketide biosynthesis. Its function is as follows. Part of the gene cluster B that mediates the biosynthesis of botcinic acid and its botcinin derivatives, acetate-derived polyketides that contribute to virulence when combined with the sesquiterpene botrydial. Botcinic acid and its derivatives have been shown to induce chlorosis and necrosis during host plant infection, but also have antifungal activities. Two polyketide synthases, BOA6 and BOA9, are involved in the biosynthesis of botcinins. BOA6 mediates the formation of the per-methylated tetraketide core by condensation of four units of malonyl-CoA with one unit of acetyl-CoA, which would be methylated in activated methylene groups to yield a bicyclic acid intermediate that could then either be converted to botrylactone derivatives or lose the starter acetate unit through a retro-Claisen type C-C bond cleavage to yield botcinin derivatives. The second polyketide synthase, BOA9, is probably required for the biosynthesis of the tetraketide side chain of botcinins. The methyltransferase (MT) domain within BOA6 is probably responsible for the incorporation of four methyl groups. The trans-enoyl reductase BOA5 might take over the enoyl reductase function of BOA6 that misses an ER domain. The monooxygenases BOA2, BOA3 and BOA4 might be involved in further hydroxylations at C4, C5 and C8, whereas BOA7, close to BOA9, could potentially be involved in the hydroxylation at C4 in the side chain of botcinins. This Botryotinia fuckeliana (strain B05.10) (Noble rot fungus) protein is Botcinic acid biosynthesis cluster B protein 12.